The chain runs to 509 residues: Heat shock 70 kDa protein 14 (509 aa).

This sequence belongs to the heat shock protein 70 family. Component of ribosome-associated complex (RAC), a heterodimer composed of Hsp70/DnaK-type chaperone HSPA14 and Hsp40/DnaJ-type chaperone DNAJC2.

Its subcellular location is the cytoplasm. The protein localises to the cytosol. Its function is as follows. Component of the ribosome-associated complex (RAC), a complex involved in folding or maintaining nascent polypeptides in a folding-competent state. In the RAC complex, binds to the nascent polypeptide chain, while DNAJC2 stimulates its ATPase activity. The protein is Heat shock 70 kDa protein 14 (HSPA14) of Pongo abelii (Sumatran orangutan).